The primary structure comprises 593 residues: Arginine--tRNA ligase (593 aa).

Residues 138 to 148 (ANPTGPLHVGH) carry the 'HIGH' region motif.

It belongs to the class-I aminoacyl-tRNA synthetase family. In terms of assembly, monomer.

It is found in the cytoplasm. The enzyme catalyses tRNA(Arg) + L-arginine + ATP = L-arginyl-tRNA(Arg) + AMP + diphosphate. This Burkholderia orbicola (strain MC0-3) protein is Arginine--tRNA ligase.